A 345-amino-acid polypeptide reads, in one-letter code: Phosphoribosylformylglycinamidine cyclo-ligase (345 aa).

This sequence belongs to the AIR synthase family.

Its subcellular location is the cytoplasm. It carries out the reaction 2-formamido-N(1)-(5-O-phospho-beta-D-ribosyl)acetamidine + ATP = 5-amino-1-(5-phospho-beta-D-ribosyl)imidazole + ADP + phosphate + H(+). The protein operates within purine metabolism; IMP biosynthesis via de novo pathway; 5-amino-1-(5-phospho-D-ribosyl)imidazole from N(2)-formyl-N(1)-(5-phospho-D-ribosyl)glycinamide: step 2/2. In Histophilus somni (strain 129Pt) (Haemophilus somnus), this protein is Phosphoribosylformylglycinamidine cyclo-ligase.